A 122-amino-acid chain; its full sequence is Large ribosomal subunit protein uL14 (122 aa).

Belongs to the universal ribosomal protein uL14 family. As to quaternary structure, part of the 50S ribosomal subunit. Forms a cluster with proteins L3 and L19. In the 70S ribosome, L14 and L19 interact and together make contacts with the 16S rRNA in bridges B5 and B8.

Binds to 23S rRNA. Forms part of two intersubunit bridges in the 70S ribosome. This chain is Large ribosomal subunit protein uL14, found in Azoarcus sp. (strain BH72).